A 463-amino-acid polypeptide reads, in one-letter code: MTTETRSLYSQLPAIDRLLRDSSFLSLRDTYGHTRVVELLRQMLDEAREVIRGSQTLPAWCENWAQEVDARLTKEAQSALRPVINLTGTVLHTNLGRALQAEAAVEAVTKAMRSPVTLEYDLDDAGRGHRDRALAQLLCRITGAEDACIVNNNAAAVLLMLAATASGKEVVVSRGELVEIGGAFRIPDVMRQAGCTLHEVGTTNRTHANDYRQAVNENTALLMKVHTSNYSIQGFTKAIDEAELVALGKELDVPVVTDLGSGSLVDLSQYGLPKEPMPQELIAAGVSLVSFSGDKLLGGPQAGIIVGKKEMIARLQSHPLKRALRADKMTLAALEATLRLYLHPEALSKKLPTLRLLTRSAEVIQIQAQRLQAPLAAHYGAEFAVQVMPCLSQIGSGSLPVDRLPSAALTFTPHDGRGSHLESLAARWRELPVPVIGRIYDGRLWLDLRCLEDEQRFLEMLLK.

An N6-(pyridoxal phosphate)lysine modification is found at Lys295.

This sequence belongs to the SelA family. As to quaternary structure, homodecamer; pentamer of dimers. Binds only one seryl-tRNA(Sec) per dimer. Pyridoxal 5'-phosphate is required as a cofactor.

The protein localises to the cytoplasm. The enzyme catalyses L-seryl-tRNA(Sec) + selenophosphate + H(+) = L-selenocysteinyl-tRNA(Sec) + phosphate. The protein operates within aminoacyl-tRNA biosynthesis; selenocysteinyl-tRNA(Sec) biosynthesis; selenocysteinyl-tRNA(Sec) from L-seryl-tRNA(Sec) (bacterial route): step 1/1. Its function is as follows. Converts seryl-tRNA(Sec) to selenocysteinyl-tRNA(Sec) required for selenoprotein biosynthesis. This is L-seryl-tRNA(Sec) selenium transferase from Escherichia coli (strain SMS-3-5 / SECEC).